Reading from the N-terminus, the 350-residue chain is Protein RecA (350 aa).

An ATP-binding site is contributed by 65–72; that stretch reads GPESSGKT. Positions 329 to 350 are disordered; it reads ASPDVKANPVKETEDDMADADI. Acidic residues predominate over residues 341–350; the sequence is TEDDMADADI.

It belongs to the RecA family.

It localises to the cytoplasm. In terms of biological role, can catalyze the hydrolysis of ATP in the presence of single-stranded DNA, the ATP-dependent uptake of single-stranded DNA by duplex DNA, and the ATP-dependent hybridization of homologous single-stranded DNAs. It interacts with LexA causing its activation and leading to its autocatalytic cleavage. The sequence is that of Protein RecA from Pseudomonas fluorescens (strain ATCC BAA-477 / NRRL B-23932 / Pf-5).